A 328-amino-acid chain; its full sequence is dTDP-glucose 4,6-dehydratase (328 aa).

NAD(+) is bound by residues Phe13–Ile14, Asp37–Thr40, Asp63–Ile64, Leu82–Ser86, and Thr101. Substrate is bound at residue Ser86. A substrate-binding site is contributed by Thr126. Asp127 functions as the Proton donor in the catalytic mechanism. Catalysis depends on proton acceptor residues Glu128 and Tyr150. Tyr150–Lys154 contributes to the NAD(+) binding site. Asn179 contributes to the substrate binding site. Asn180 contacts NAD(+). Substrate contacts are provided by residues Lys189–Leu190, Pro205–Tyr207, Arg214, Asn249, and Asp272–His276.

This sequence belongs to the NAD(P)-dependent epimerase/dehydratase family. dTDP-glucose dehydratase subfamily. In terms of assembly, homodimer. The cofactor is NAD(+).

The enzyme catalyses dTDP-alpha-D-glucose = dTDP-4-dehydro-6-deoxy-alpha-D-glucose + H2O. It functions in the pathway antibiotic biosynthesis; streptomycin biosynthesis. Involved in the biosynthesis of the streptose moiety of streptomycin. Catalyzes the dehydration of dTDP-D-glucose to form dTDP-6-deoxy-D-xylo-4-hexulose via a three-step process involving oxidation, dehydration and reduction. The protein is dTDP-glucose 4,6-dehydratase of Streptomyces griseus.